A 241-amino-acid chain; its full sequence is Triosephosphate isomerase (241 aa).

A substrate-binding site is contributed by 9–11; that stretch reads NWK. The active-site Electrophile is the His-96. Residue Glu-165 is the Proton acceptor of the active site. Substrate-binding positions include Gly-171, Ser-204, and 225–226; that span reads GG.

It belongs to the triosephosphate isomerase family. In terms of assembly, homodimer.

It localises to the cytoplasm. The catalysed reaction is D-glyceraldehyde 3-phosphate = dihydroxyacetone phosphate. It functions in the pathway carbohydrate biosynthesis; gluconeogenesis. The protein operates within carbohydrate degradation; glycolysis; D-glyceraldehyde 3-phosphate from glycerone phosphate: step 1/1. Its function is as follows. Involved in the gluconeogenesis. Catalyzes stereospecifically the conversion of dihydroxyacetone phosphate (DHAP) to D-glyceraldehyde-3-phosphate (G3P). The chain is Triosephosphate isomerase from Trichormus variabilis (strain ATCC 29413 / PCC 7937) (Anabaena variabilis).